We begin with the raw amino-acid sequence, 205 residues long: Putative 3-methyladenine DNA glycosylase (205 aa).

It belongs to the DNA glycosylase MPG family.

The polypeptide is Putative 3-methyladenine DNA glycosylase (Clostridium perfringens (strain SM101 / Type A)).